The following is a 285-amino-acid chain: NADPH-dependent 7-cyano-7-deazaguanine reductase (285 aa).

A substrate-binding site is contributed by 91–93 (IES). Residue 93-94 (SK) coordinates NADPH. Cys191 serves as the catalytic Thioimide intermediate. Catalysis depends on Asp198, which acts as the Proton donor. 230 to 231 (HE) contributes to the substrate binding site. NADPH is bound at residue 259–260 (RG).

Belongs to the GTP cyclohydrolase I family. QueF type 2 subfamily. In terms of assembly, homodimer.

The protein resides in the cytoplasm. It catalyses the reaction 7-aminomethyl-7-carbaguanine + 2 NADP(+) = 7-cyano-7-deazaguanine + 2 NADPH + 3 H(+). Its pathway is tRNA modification; tRNA-queuosine biosynthesis. Functionally, catalyzes the NADPH-dependent reduction of 7-cyano-7-deazaguanine (preQ0) to 7-aminomethyl-7-deazaguanine (preQ1). The polypeptide is NADPH-dependent 7-cyano-7-deazaguanine reductase (Legionella pneumophila (strain Lens)).